Here is a 795-residue protein sequence, read N- to C-terminus: ATP-dependent RNA helicase DHX15 (795 aa).

Residues Met1 to His108 are disordered. A Phosphoserine modification is found at Ser15. Over residues Ala20–Arg62 the composition is skewed to basic and acidic residues. The segment covering Ala79–His108 has biased composition (low complexity). The 167-residue stretch at Thr147–Pro313 folds into the Helicase ATP-binding domain. Gly160–Thr167 contacts ATP. The DEAH box signature appears at Asp260–His263. The Helicase C-terminal domain occupies Thr338 to Gly518. N6-acetyllysine is present on Lys488. Lys786 is covalently cross-linked (Glycyl lysine isopeptide (Lys-Gly) (interchain with G-Cter in SUMO2)).

Belongs to the DEAD box helicase family. DEAH subfamily. DDX15/PRP43 sub-subfamily. As to quaternary structure, component of the U11/U12 snRNPs that are part of the U12-type spliceosome. Identified in the Intron Large spliceosome complex (IL, also named intron lariat spliceosome), a post-mRNA release spliceosomal complex containing the excised intron, U2, U5 and U6 snRNPs, and splicing factors; the association may be transient. The IL complex exists in two distinct conformations, one with the DHX15 (ILS2) and one without (ILS1). Interacts with TFIP11 (via G-patch domain); indicative for a recruitment to the IL complex. Interacts with SSB/La. Interacts with GPATCH2 (via G-patch domain); promoting the RNA helicase activity. Interacts with NKRF (via G-patch domain); promoting the RNA helicase activity. Interacts with NLRP6.

It is found in the nucleus. The protein localises to the nucleolus. It catalyses the reaction ATP + H2O = ADP + phosphate + H(+). Its activity is regulated as follows. ATPase activity is enhanced upon binding to G-patch domain-containing proteins. G-patch domain-containing proteins act like a brace that tethers mobile sections of DHX15 together, stabilizing a functional conformation with high RNA affinity, thereby promoting the ATPase activity. Its function is as follows. RNA helicase involved in mRNA processing and antiviral innate immunity. Pre-mRNA processing factor involved in disassembly of spliceosomes after the release of mature mRNA. In cooperation with TFIP11 seem to be involved in the transition of the U2, U5 and U6 snRNP-containing IL complex to the snRNP-free IS complex leading to efficient debranching and turnover of excised introns. Plays a key role in antiviral innate immunity by promoting both MAVS-dependent signaling and NLRP6 inflammasome. Acts as an RNA virus sensor: recognizes and binds viral double stranded RNA (dsRNA) and activates the MAVS-dependent signaling to produce interferon-beta and interferon lambda-3 (IFNL3). Involved in intestinal antiviral innate immunity together with NLRP6: recognizes and binds viral dsRNA and promotes activation of the NLRP6 inflammasome in intestinal epithelial cells to restrict infection by enteric viruses. The NLRP6 inflammasome acts by promoting maturation and secretion of IL18 in the extracellular milieu. Also involved in antibacterial innate immunity by promoting Wnt-induced antimicrobial protein expression in Paneth cells. The polypeptide is ATP-dependent RNA helicase DHX15 (Pongo abelii (Sumatran orangutan)).